Consider the following 89-residue polypeptide: Small ribosomal subunit protein uS15 (89 aa).

Belongs to the universal ribosomal protein uS15 family. Part of the 30S ribosomal subunit. Forms a bridge to the 50S subunit in the 70S ribosome, contacting the 23S rRNA.

In terms of biological role, one of the primary rRNA binding proteins, it binds directly to 16S rRNA where it helps nucleate assembly of the platform of the 30S subunit by binding and bridging several RNA helices of the 16S rRNA. Its function is as follows. Forms an intersubunit bridge (bridge B4) with the 23S rRNA of the 50S subunit in the ribosome. The chain is Small ribosomal subunit protein uS15 from Photorhabdus laumondii subsp. laumondii (strain DSM 15139 / CIP 105565 / TT01) (Photorhabdus luminescens subsp. laumondii).